The chain runs to 191 residues: UPF0669 protein C6orf120 homolog (191 aa).

The first 30 residues, 1-30, serve as a signal peptide directing secretion; the sequence is MAAPRGRAAPWTTALLLLLTSQILSPGSCA. N-linked (GlcNAc...) asparagine glycosylation occurs at Asn53.

This sequence belongs to the UPF0669 family.

The protein localises to the secreted. May be involved in induction of apoptosis in CD4(+) T-cells, but not CD8(+) T-cells or hepatocytes. This Macaca fascicularis (Crab-eating macaque) protein is UPF0669 protein C6orf120 homolog.